Consider the following 351-residue polypeptide: Histidine protein kinase SaeS (351 aa).

2 helical membrane passes run 9 to 29 and 40 to 60; these read IIIG…IAYI and TLTL…SIFI. The HAMP domain occupies 61-114; it reads NPLIQKIKQFNIKTKQFANGNYASNDKTFNSPKEIYELNQSFNKMASEITQQMN. Residues 129–348 form the Histidine kinase domain; that stretch reads NLAHDLKTPL…TMTVTLHKLD (220 aa). The residue at position 132 (H132) is a Phosphohistidine; by autocatalysis.

Autophosphorylated.

It localises to the cell membrane. It carries out the reaction ATP + protein L-histidine = ADP + protein N-phospho-L-histidine.. Functionally, member of the two-component regulatory system SaeR/SaeS involved in the regulation of staphylococcal virulence factors in a strain-dependent fashion. Probably functions as a membrane-associated protein kinase that upon sensing the appropriate signal, autophosphorylates and in turn activates the cytosolic response regulator SaeR. SaeR/SaeS activates the expression of exoproteins involved in adhesion and invasion of host cells, including hemolysins (hla, hlb, hlgC), coa, DNase, spa and cell wall-associated proteins (emp, eap, fnbA, fnbB, efb). Represses the expression of type 5 capsular polysaccharide (cap operon). Also modulates the expression of several other genes. The chain is Histidine protein kinase SaeS (saeS) from Staphylococcus aureus (strain Newman).